The following is a 392-amino-acid chain: WD repeat-containing protein GTS1 (392 aa).

WD repeat units lie at residues 81-124 (GHSD…QVSR), 128-167 (GNDQ…QVAC), 171-211 (SHMD…NDDD), and 323-368 (GHID…TEIN).

As to expression, expressed in germinating seeds, rosettes leaves, flowers and siliques.

Functionally, involved in the control of plant growth development. Acts as negative regulator of seed germination, cell division in meristematic regions, plant growth and overall biomass accumulation. May function by regulating ribosome activities and biogenesis in plant cells. This is WD repeat-containing protein GTS1 from Arabidopsis thaliana (Mouse-ear cress).